A 180-amino-acid polypeptide reads, in one-letter code: Large ribosomal subunit protein uL6 (180 aa).

The protein belongs to the universal ribosomal protein uL6 family. Part of the 50S ribosomal subunit.

Its function is as follows. This protein binds to the 23S rRNA, and is important in its secondary structure. It is located near the subunit interface in the base of the L7/L12 stalk, and near the tRNA binding site of the peptidyltransferase center. The protein is Large ribosomal subunit protein uL6 of Anaeromyxobacter sp. (strain K).